The chain runs to 331 residues: Nodulation protein D 2 (331 aa).

An HTH lysR-type domain is found at 6 to 63; that stretch reads LDLNLLVALDALMTERSLTAAARKINLSQPAMSAAVARLRSYFRDELFAMRGRKLVPT. The segment at residues 23 to 42 is a DNA-binding region (H-T-H motif); sequence LTAAARKINLSQPAMSAAVA.

Belongs to the LysR transcriptional regulatory family.

In terms of biological role, nodD regulates the expression of the nodABCFE genes which encode other nodulation proteins. NodD is also a negative regulator of its own expression. Binds flavonoids as inducers. The sequence is that of Nodulation protein D 2 (nodD2) from Bradyrhizobium elkanii.